The chain runs to 206 residues: Large ribosomal subunit protein uL3 (206 aa).

Residues 127 to 151 (SGGPSSHGSKFHRHLGGTGQATTPA) are disordered.

The protein belongs to the universal ribosomal protein uL3 family. As to quaternary structure, part of the 50S ribosomal subunit. Forms a cluster with proteins L14 and L19.

Its function is as follows. One of the primary rRNA binding proteins, it binds directly near the 3'-end of the 23S rRNA, where it nucleates assembly of the 50S subunit. This is Large ribosomal subunit protein uL3 from Borreliella burgdorferi (strain ATCC 35210 / DSM 4680 / CIP 102532 / B31) (Borrelia burgdorferi).